An 854-amino-acid chain; its full sequence is Probable disease resistance protein At1g51480 (854 aa).

Residues 25-62 (RNYIHKMEANLDDLHTTMEELKNGRDDLLRRVSIEEDK) are a coiled coil. An NB-ARC domain is found at 138-441 (AHKIPVPKVE…CEGYINPNRY (304 aa)). 180-187 (GMGGVGKT) is a binding site for ATP. LRR repeat units lie at residues 514–535 (IVRQ…SKCS), 536–557 (NLST…FFLF), 560–582 (KLVV…ISNL), 584–605 (SLQY…MKKL), 607–629 (KLIY…SATL), and 631–652 (NLQV…MEEL).

The protein belongs to the disease resistance NB-LRR family.

Functionally, probable disease resistance protein. The chain is Probable disease resistance protein At1g51480 from Arabidopsis thaliana (Mouse-ear cress).